The primary structure comprises 92 residues: RQC P-site tRNA stabilizing factor (92 aa).

Positions 5–65 (MRLDKYLKVS…GPKIVTAKIE (61 aa)) constitute an S4 RNA-binding domain.

Belongs to the RqcP family. Associates with stalled 50S ribosomal subunits. Binds to RqcH, 23S rRNA and the P-site tRNA. Does not require RqcH for association with 50S subunits.

Its function is as follows. Key component of the ribosome quality control system (RQC), a ribosome-associated complex that mediates the extraction of incompletely synthesized nascent chains from stalled ribosomes and their subsequent degradation. RqcH recruits Ala-charged tRNA, and with RqcP directs the elongation of stalled nascent chains on 50S ribosomal subunits, leading to non-templated C-terminal alanine extensions (Ala tail). The Ala tail promotes nascent chain degradation. RqcP is associated with the translocation-like movement of the peptidyl-tRNA from the A-site into the P-site. The polypeptide is RQC P-site tRNA stabilizing factor (Listeria innocua serovar 6a (strain ATCC BAA-680 / CLIP 11262)).